Here is a 198-residue protein sequence, read N- to C-terminus: Recombination protein RecR (198 aa).

The segment at 57-72 (CSVCGNLTDEDPCSIC) adopts a C4-type zinc-finger fold. One can recognise a Toprim domain in the interval 80–175 (SMILVVEDSK…KVTRLARGLA (96 aa)).

Belongs to the RecR family.

In terms of biological role, may play a role in DNA repair. It seems to be involved in an RecBC-independent recombinational process of DNA repair. It may act with RecF and RecO. This chain is Recombination protein RecR, found in Streptococcus uberis (strain ATCC BAA-854 / 0140J).